A 173-amino-acid polypeptide reads, in one-letter code: Shikimate kinase 2 (173 aa).

Position 12 to 17 (12 to 17 (GCGKTT)) interacts with ATP. 2 residues coordinate Mg(2+): threonine 16 and aspartate 32. Aspartate 34, arginine 58, and glycine 79 together coordinate substrate. An LID domain region spans residues 112 to 126 (EENPQDNQRPTLTGR). ATP is bound at residue arginine 120. Residue arginine 139 coordinates substrate. Glutamine 155 contacts ATP.

This sequence belongs to the shikimate kinase family. AroL subfamily. Monomer. The cofactor is Mg(2+).

It localises to the cytoplasm. The catalysed reaction is shikimate + ATP = 3-phosphoshikimate + ADP + H(+). It functions in the pathway metabolic intermediate biosynthesis; chorismate biosynthesis; chorismate from D-erythrose 4-phosphate and phosphoenolpyruvate: step 5/7. In terms of biological role, catalyzes the specific phosphorylation of the 3-hydroxyl group of shikimic acid using ATP as a cosubstrate. This is Shikimate kinase 2 from Pectobacterium atrosepticum (strain SCRI 1043 / ATCC BAA-672) (Erwinia carotovora subsp. atroseptica).